The following is a 342-amino-acid chain: Autoinducer 2 import system permease protein LsrC (342 aa).

Over 1 to 13 the chain is Periplasmic; that stretch reads MLKFIQNNREITA. A helical transmembrane segment spans residues 14–34; that stretch reads LLAVVLLFVLPGFLDRQYLSV. The Cytoplasmic portion of the chain corresponds to 35–38; that stretch reads QTLT. The chain crosses the membrane as a helical span at residues 39 to 59; it reads MVYSSAQILILLAMGATLVML. At 60-69 the chain is on the periplasmic side; the sequence is TRNIDVSVGS. Residues 70-90 traverse the membrane as a helical segment; it reads ITGMCAVLLGMLLNAGYSLPV. At 91–92 the chain is on the cytoplasmic side; it reads AC. Residues 93–113 form a helical membrane-spanning segment; sequence VATLLLGLLAGFFNGALVAWL. Residue Lys-114 is a topological domain, periplasmic. The chain crosses the membrane as a helical span at residues 115 to 135; it reads IPAIVATLGTLGLYRGIMLLW. Residues 136-154 lie on the Cytoplasmic side of the membrane; that stretch reads TGGKWIEGLPAELKQLSAP. Residues 155 to 175 form a helical membrane-spanning segment; the sequence is LLLGISAIGWLTIILVAFMAW. At 176–212 the chain is on the periplasmic side; it reads LLAKTAFGRSFYATGDNLQGARQLGVRTEAIRIVAFS. Residues 213-233 traverse the membrane as a helical segment; sequence LNGCMAALAGIVFASQIGFIL. Residues 234–251 lie on the Cytoplasmic side of the membrane; the sequence is NQTGTGLEMKAIAACVLG. A helical membrane pass occupies residues 252 to 272; it reads GISLLGGSGAIIGAVLGAWFL. Over 273 to 283 the chain is Periplasmic; the sequence is TQIDSVLVLLR. The helical transmembrane segment at 284-304 threads the bilayer; the sequence is IPAWWNDFIAGLVLLAVLVFD. At 305 to 342 the chain is on the cytoplasmic side; that stretch reads GRLRCALERNLRRQKYARFMTPPPSVKPASSGKKREAA.

It belongs to the binding-protein-dependent transport system permease family. AraH/RbsC subfamily. In terms of assembly, the complex is composed of two ATP-binding proteins (LsrA), two transmembrane proteins (LsrC and LsrD) and a solute-binding protein (LsrB).

Its subcellular location is the cell inner membrane. In terms of biological role, part of the ABC transporter complex LsrABCD involved in autoinducer 2 (AI-2) import. Probably responsible for the translocation of the substrate across the membrane. This chain is Autoinducer 2 import system permease protein LsrC (lsrC), found in Shigella flexneri.